A 105-amino-acid polypeptide reads, in one-letter code: Circadian clock oscillator protein KaiB1 (105 aa).

This sequence belongs to the KaiB family. In terms of assembly, homotetramer in solution and crystals formed by 2 dimers. Only elutes as a homotetramer in size exclusion chromatography, interacts with KaiC1 and KaiC3. The KaiABC complex composition changes during the circadian cycle to control KaiC phosphorylation. Complexes KaiC(6), KaiA(2-4):KaiC(6), KaiB(6):KaiC(6) and KaiC(6):KaiB(6):KaiA(12) are among the most important forms, many form cooperatively. Undergoes a major conformational rearrangment; in the free state forms homotetramers as a dimer of dimers. When bound to the CI domain of KaiC switches to a monomeric thioredoxin-fold (KaiB(fs)). KaiB(fs) binds CikA, leading it to dephosphorylate phospho-RpaA.

Functionally, key component of the KaiABC oscillator complex, which constitutes the main circadian regulator in cyanobacteria. Complex composition changes during the circadian cycle to control KaiC phosphorylation. KaiA stimulates KaiC autophosphorylation, while KaiB sequesters KaiA, leading to KaiC autodephosphorylation. Phospho-Ser-431 KaiC accumulation triggers binding of KaiB to form the KaiB(6):KaiC(6) complex, leading to changes in output regulators CikA and SasA. KaiB switches to a thioredoxin-like fold (KaiB(fs)) when bound to KaiC. KaiB(6):KaiC(6) formation exposes a site for KaiA binding that sequesters KaiA from KaiC, making the KaiC(6):KaiB(6):KaiA(12) complex that results in KaiC autodephosphorylation. In terms of biological role, component of the oscillator and circadian clock in this organism, enhances fitness in a rhythmic environment. The homotetramer reduces the ATPase activity of KaiC3 by 35%. A metamorphic protein which reversibly switches between an inactive tetrameric fold and a rare, thioredoxin-like monomeric fold (KaiB(fs)). KaiB(fs) binds phospho-KaiC, KaiA and CikA. KaiA and CikA compete for binding to KaiB(fs), and KaiB(fs) and SasA compete for binding to KaiC, thus the clock oscillator and output signal pathway are tightly coupled. In Synechocystis sp. (strain ATCC 27184 / PCC 6803 / Kazusa), this protein is Circadian clock oscillator protein KaiB1.